The following is a 600-amino-acid chain: MEHVTEGSWESLPVPLHPQVLGALRELGFPYMTPVQSATIPLFMRNKDVAAEAVTGSGKTLAFVIPILEILLRREEKLKKSQVGAIIITPTRELAIQIDEVLSHFTKHFPEFSQILWIGGRNPGEDVERFKQQGGNIIVATPGRLEDMFRRKAEGLDLASCVRSLDVLVLDEADRLLDMGFEASINTILEFLPKQRRTGLFSATQTQEVENLVRAGLRNPVRVSVKEKGVAASSAQKTPSRLENYYMVCKADEKFNQLVHFLRNHKQEKHLVFFSTCACVEYYGKALEVLVKGVKIMCIHGKMKYKRNKIFMEFRKLQSGILVCTDVMARGIDIPEVNWVLQYDPPSNASAFVHRCGRTARIGHGGSALVFLLPMEESYINFLAINQKCPLQEMKPQRNTADLLPKLKSMALADRAVFEKGMKAFVSYVQAYAKHECNLIFRLKDLDFASLARGFALLRMPKMPELRGKQFPDFVPVDVNTDTIPFKDKIREKQRQKLLEQQRREKTENEGRRKFIKNKAWSKQKAKKEKKKKMNEKRKREEGSDIEDEDMEELLNDTRLLKKLKKGKITEEEFEKGLLTTGKRTIKTVDLGISDLEDDC.

The Q motif motif lies at 9-37 (WESLPVPLHPQVLGALRELGFPYMTPVQS). The Helicase ATP-binding domain occupies 40–223 (IPLFMRNKDV…RAGLRNPVRV (184 aa)). Position 53–60 (53–60 (AVTGSGKT)) interacts with ATP. A DEAD box motif is present at residues 171 to 174 (DEAD). Positions 254-402 (KFNQLVHFLR…EMKPQRNTAD (149 aa)) constitute a Helicase C-terminal domain. Basic and acidic residues predominate over residues 500-513 (EQQRREKTENEGRR). The tract at residues 500-550 (EQQRREKTENEGRRKFIKNKAWSKQKAKKEKKKKMNEKRKREEGSDIEDED) is disordered. Residues 514-537 (KFIKNKAWSKQKAKKEKKKKMNEK) show a composition bias toward basic residues. Residues 533–562 (KMNEKRKREEGSDIEDEDMEELLNDTRLLK) form an important for nuclear localization region. 2 positions are modified to phosphoserine: serine 544 and serine 594.

Belongs to the DEAD box helicase family. DDX55/SPB4 subfamily. As to quaternary structure, interacts with 28S rRNA. Interacts with double-stranded RNA substrates in vitro; the interaction stimulates ATPase activity.

Its subcellular location is the nucleus. It is found in the nucleoplasm. The enzyme catalyses ATP + H2O = ADP + phosphate + H(+). Probable ATP-binding RNA helicase. Has ATPase activity and is involved in the maturation of precursor large subunit rRNAs. This Homo sapiens (Human) protein is ATP-dependent RNA helicase DDX55.